A 261-amino-acid chain; its full sequence is tRNA pseudouridine synthase A (261 aa).

Asp51 (nucleophile) is an active-site residue. Substrate is bound at residue Tyr109.

Belongs to the tRNA pseudouridine synthase TruA family. Homodimer.

It carries out the reaction uridine(38/39/40) in tRNA = pseudouridine(38/39/40) in tRNA. Functionally, formation of pseudouridine at positions 38, 39 and 40 in the anticodon stem and loop of transfer RNAs. This chain is tRNA pseudouridine synthase A, found in Methylobacillus flagellatus (strain ATCC 51484 / DSM 6875 / VKM B-1610 / KT).